We begin with the raw amino-acid sequence, 465 residues long: MSSTNHFTYLVLGAGSGGIASARRAAKHLNAKGNGDRIGIVEVTRPGGTCVNVGCVPKKVMWNTSFIKEMINAAPSYGFDFGGQQVKFNWPTIKKARDEYIKRLNGIYDSNLAKDNIVRINGYGRFSGPKEIQVNGANGEKYTADHILIAAGGRPTVPDVPGKELGITSDGFFELEDLPKSTLVVGAGYIAVELAGVLHSLGSETTMVIRQKQFLRTFDEMLHTTLLKQMTDDGVKFVTEASIKSLERDVDGKRIIATTNAGVKLPPVECVIWAIGRVPNTDDLGIDKAGIQLTEQSGFIKVDEFQNTNVPGVHAVGDICGNFLLTPVAIAAGRRLSERLFNGKSDLKFEYENVATVVFSHPPIGTVGLTEQEAITKYGTENIKCYNTSFINMFYSVQVHKVRTSMKLVCLGKEEKVIGLHIIGDGCDEIIQGFAVAVKMGCTKWDLDNTCAIHPTSAEELVTMV.

FAD is bound by residues Ser-16 and Gly-17. Residue Ser-16 coordinates glutathione. Position 23 (Arg-23) interacts with glutathione. FAD contacts are provided by Glu-42, Thr-49, Cys-50, and Lys-58. An intrachain disulfide couples Cys-50 to Cys-55. Tyr-108 is a glutathione binding site. Gly-124 is an FAD binding site. Positions 187, 190, 193, 210, 216, and 276 each coordinate NADP(+). Asp-318 is an FAD binding site. Leu-324 lines the NADP(+) pocket. Thr-326 is a binding site for FAD. Position 334 (Arg-334) interacts with glutathione. Val-357 contacts NADP(+). His-454 provides a ligand contact to FAD. Catalysis depends on His-454, which acts as the Proton acceptor.

It belongs to the class-I pyridine nucleotide-disulfide oxidoreductase family. FAD is required as a cofactor.

Its subcellular location is the cytoplasm. It carries out the reaction 2 glutathione + NADP(+) = glutathione disulfide + NADPH + H(+). Its function is as follows. Catalyzes the reduction of glutathione disulfide (GSSG) to reduced glutathione (GSH). Constitutes the major mechanism to maintain a high GSH:GSSG ratio in the cytosol. The amount of GSH may affect the determination of cell fate. This is Glutathione reductase (gsr) from Dictyostelium discoideum (Social amoeba).